The sequence spans 661 residues: Translation factor GUF1 homolog, mitochondrial (661 aa).

One can recognise a tr-type G domain in the interval 59 to 242 (ENIRNFCIVA…AIIDRIPSPK (184 aa)). GTP-binding positions include 68–75 (AHVDHGKS), 135–139 (DTPGH), and 189–192 (NKVD).

It belongs to the TRAFAC class translation factor GTPase superfamily. Classic translation factor GTPase family. LepA subfamily.

The protein resides in the mitochondrion inner membrane. The catalysed reaction is GTP + H2O = GDP + phosphate + H(+). In terms of biological role, promotes mitochondrial protein synthesis. May act as a fidelity factor of the translation reaction, by catalyzing a one-codon backward translocation of tRNAs on improperly translocated ribosomes. Binds to mitochondrial ribosomes in a GTP-dependent manner. This chain is Translation factor GUF1 homolog, mitochondrial, found in Ixodes scapularis (Black-legged tick).